The sequence spans 391 residues: Phosphoglycerate kinase (391 aa).

Substrate contacts are provided by residues 21–23 (DLN), Arg36, 59–62 (HLGR), Arg114, and Arg147. ATP contacts are provided by residues Lys198, Glu315, and 344-347 (GGDT).

It belongs to the phosphoglycerate kinase family. As to quaternary structure, monomer.

Its subcellular location is the cytoplasm. The enzyme catalyses (2R)-3-phosphoglycerate + ATP = (2R)-3-phospho-glyceroyl phosphate + ADP. It functions in the pathway carbohydrate degradation; glycolysis; pyruvate from D-glyceraldehyde 3-phosphate: step 2/5. This Haemophilus ducreyi (strain 35000HP / ATCC 700724) protein is Phosphoglycerate kinase.